A 555-amino-acid chain; its full sequence is CTP synthase (555 aa).

Positions 1–265 are amidoligase domain; sequence MTRYIFITGG…GNRVCEKLNI (265 aa). S13 is a binding site for CTP. S13 contributes to the UTP binding site. Residues 14-19 and D71 contribute to the ATP site; that span reads SLGKGI. Residues D71 and E139 each coordinate Mg(2+). CTP-binding positions include 146–148, 186–191, and K222; these read DIE and KTKPTQ. UTP contacts are provided by residues 186–191 and K222; that span reads KTKPTQ. A Glutamine amidotransferase type-1 domain is found at 290-541; it reads TVAVVGKYVD…IKAGLAAKEA (252 aa). Residue G351 coordinates L-glutamine. The active-site Nucleophile; for glutamine hydrolysis is the C378. L-glutamine is bound by residues 379–382, E402, and R469; that span reads LGMQ. Catalysis depends on residues H514 and E516.

It belongs to the CTP synthase family. Homotetramer.

The enzyme catalyses UTP + L-glutamine + ATP + H2O = CTP + L-glutamate + ADP + phosphate + 2 H(+). It catalyses the reaction L-glutamine + H2O = L-glutamate + NH4(+). It carries out the reaction UTP + NH4(+) + ATP = CTP + ADP + phosphate + 2 H(+). It functions in the pathway pyrimidine metabolism; CTP biosynthesis via de novo pathway; CTP from UDP: step 2/2. With respect to regulation, allosterically activated by GTP, when glutamine is the substrate; GTP has no effect on the reaction when ammonia is the substrate. The allosteric effector GTP functions by stabilizing the protein conformation that binds the tetrahedral intermediate(s) formed during glutamine hydrolysis. Inhibited by the product CTP, via allosteric rather than competitive inhibition. Functionally, catalyzes the ATP-dependent amination of UTP to CTP with either L-glutamine or ammonia as the source of nitrogen. Regulates intracellular CTP levels through interactions with the four ribonucleotide triphosphates. This chain is CTP synthase, found in Coxiella burnetii (strain RSA 331 / Henzerling II).